The sequence spans 471 residues: Putative multidrug resistance protein MdtD (471 aa).

At 1–11 the chain is on the periplasmic side; it reads MTDLPDSTRWQ. Residues 12-32 traverse the membrane as a helical segment; the sequence is LWIVAFGFFMQSLDTTIVNTA. The Cytoplasmic segment spans residues 33 to 48; that stretch reads LPSMAQSLGESPLHMH. A helical membrane pass occupies residues 49-69; sequence MVIVSYVLTVAVMLPASGWLA. The Periplasmic portion of the chain corresponds to 70-76; that stretch reads DKVGVRN. The helical transmembrane segment at 77-97 threads the bilayer; sequence IFFTAIVLFTLGSLFCALSGT. Over 98 to 101 the chain is Cytoplasmic; that stretch reads LNEL. The helical transmembrane segment at 102 to 124 threads the bilayer; the sequence is LLARALQGVGGAMMVPVGRLTVM. At 125–137 the chain is on the periplasmic side; the sequence is KIVPREQYMAAMT. The chain crosses the membrane as a helical span at residues 138–158; the sequence is FVTLPGQVGPLLGPALGGLLV. Over 159–164 the chain is Cytoplasmic; that stretch reads EYASWH. The chain crosses the membrane as a helical span at residues 165–185; it reads WIFLINIPVGIIGAIATLMLM. Residues 186 to 196 lie on the Periplasmic side of the membrane; it reads PNYTMQTRRFD. Residues 197-217 traverse the membrane as a helical segment; it reads LSGFLLLAVGMAVLTLALDGS. Over 218-224 the chain is Cytoplasmic; sequence KGTGLSP. Residues 225–245 form a helical membrane-spanning segment; that stretch reads LTIDGLVAVGVVALVLYLLHA. The Periplasmic segment spans residues 246–262; sequence RNNNRALFSLKLFRTRT. The helical transmembrane segment at 263 to 283 threads the bilayer; that stretch reads FSLGLAGSFAGRIGSGMLPFM. Residues 284 to 285 are Cytoplasmic-facing; that stretch reads TP. A helical membrane pass occupies residues 286 to 306; it reads VFLQIGLGFSPFHAGLMMIPM. Residues 307–341 are Periplasmic-facing; sequence VLGSMGMKRIVVQVVNRFGYRRVLVATTLGLSLVT. The helical transmembrane segment at 342-362 threads the bilayer; the sequence is LLFMTTALLGWYYVLPFVLFL. The Cytoplasmic portion of the chain corresponds to 363 to 395; sequence QGMVNSTRFSSMNTLTLKDLPDNLASSGNSLLS. Residues 396-416 traverse the membrane as a helical segment; that stretch reads MIMQLSMSIGVTIAGLLLGLF. The Periplasmic portion of the chain corresponds to 417–430; that stretch reads GSQHVSVDSGTTQT. Residues 431–451 form a helical membrane-spanning segment; that stretch reads VFMYTWLSMAFIIALPAFIFA. Residues 452 to 471 are Cytoplasmic-facing; it reads RVPNDTHQNVAISRRKRSAQ.

The protein belongs to the major facilitator superfamily. TCR/Tet family.

It is found in the cell inner membrane. The polypeptide is Putative multidrug resistance protein MdtD (Escherichia coli O8 (strain IAI1)).